A 196-amino-acid chain; its full sequence is Imidazoleglycerol-phosphate dehydratase (196 aa).

It belongs to the imidazoleglycerol-phosphate dehydratase family.

It localises to the cytoplasm. The enzyme catalyses D-erythro-1-(imidazol-4-yl)glycerol 3-phosphate = 3-(imidazol-4-yl)-2-oxopropyl phosphate + H2O. The protein operates within amino-acid biosynthesis; L-histidine biosynthesis; L-histidine from 5-phospho-alpha-D-ribose 1-diphosphate: step 6/9. The sequence is that of Imidazoleglycerol-phosphate dehydratase from Desulforudis audaxviator (strain MP104C).